The primary structure comprises 96 residues: Aspartyl/glutamyl-tRNA(Asn/Gln) amidotransferase subunit C (96 aa).

This sequence belongs to the GatC family. In terms of assembly, heterotrimer of A, B and C subunits.

It carries out the reaction L-glutamyl-tRNA(Gln) + L-glutamine + ATP + H2O = L-glutaminyl-tRNA(Gln) + L-glutamate + ADP + phosphate + H(+). It catalyses the reaction L-aspartyl-tRNA(Asn) + L-glutamine + ATP + H2O = L-asparaginyl-tRNA(Asn) + L-glutamate + ADP + phosphate + 2 H(+). Allows the formation of correctly charged Asn-tRNA(Asn) or Gln-tRNA(Gln) through the transamidation of misacylated Asp-tRNA(Asn) or Glu-tRNA(Gln) in organisms which lack either or both of asparaginyl-tRNA or glutaminyl-tRNA synthetases. The reaction takes place in the presence of glutamine and ATP through an activated phospho-Asp-tRNA(Asn) or phospho-Glu-tRNA(Gln). The polypeptide is Aspartyl/glutamyl-tRNA(Asn/Gln) amidotransferase subunit C (Symbiobacterium thermophilum (strain DSM 24528 / JCM 14929 / IAM 14863 / T)).